A 441-amino-acid polypeptide reads, in one-letter code: Protein translocase subunit SecY (441 aa).

Helical transmembrane passes span I18 to G38, A78 to I98, I124 to L144, I157 to M177, L180 to A200, G215 to V235, V272 to I292, L318 to I338, I382 to T402, and V403 to T423.

The protein belongs to the SecY/SEC61-alpha family. Component of the Sec protein translocase complex. Heterotrimer consisting of SecY, SecE and SecG subunits. The heterotrimers can form oligomers, although 1 heterotrimer is thought to be able to translocate proteins. Interacts with the ribosome. Interacts with SecDF, and other proteins may be involved. Interacts with SecA.

It localises to the cell membrane. In terms of biological role, the central subunit of the protein translocation channel SecYEG. Consists of two halves formed by TMs 1-5 and 6-10. These two domains form a lateral gate at the front which open onto the bilayer between TMs 2 and 7, and are clamped together by SecE at the back. The channel is closed by both a pore ring composed of hydrophobic SecY resides and a short helix (helix 2A) on the extracellular side of the membrane which forms a plug. The plug probably moves laterally to allow the channel to open. The ring and the pore may move independently. The sequence is that of Protein translocase subunit SecY from Mycobacterium bovis (strain ATCC BAA-935 / AF2122/97).